Consider the following 432-residue polypeptide: Anaerobic glycerol-3-phosphate dehydrogenase subunit B (432 aa).

The protein belongs to the anaerobic G-3-P dehydrogenase subunit B family. In terms of assembly, composed of a catalytic GlpA/B dimer and of membrane bound GlpC. FMN is required as a cofactor.

The enzyme catalyses a quinone + sn-glycerol 3-phosphate = dihydroxyacetone phosphate + a quinol. It participates in polyol metabolism; glycerol degradation via glycerol kinase pathway; glycerone phosphate from sn-glycerol 3-phosphate (anaerobic route): step 1/1. In terms of biological role, conversion of glycerol 3-phosphate to dihydroxyacetone. Uses fumarate or nitrate as electron acceptor. This chain is Anaerobic glycerol-3-phosphate dehydrogenase subunit B (glpB), found in Haemophilus influenzae (strain ATCC 51907 / DSM 11121 / KW20 / Rd).